Consider the following 287-residue polypeptide: Acetylglutamate kinase (287 aa).

Substrate is bound by residues 70–71 (GG), arginine 92, and asparagine 184.

This sequence belongs to the acetylglutamate kinase family. ArgB subfamily.

The protein resides in the cytoplasm. It carries out the reaction N-acetyl-L-glutamate + ATP = N-acetyl-L-glutamyl 5-phosphate + ADP. The protein operates within amino-acid biosynthesis; L-arginine biosynthesis; N(2)-acetyl-L-ornithine from L-glutamate: step 2/4. In terms of biological role, catalyzes the ATP-dependent phosphorylation of N-acetyl-L-glutamate. This Roseobacter denitrificans (strain ATCC 33942 / OCh 114) (Erythrobacter sp. (strain OCh 114)) protein is Acetylglutamate kinase.